The following is a 432-amino-acid chain: D-amino acid dehydrogenase (432 aa).

Val3–Trp17 is a binding site for FAD.

It belongs to the DadA oxidoreductase family. The cofactor is FAD.

It catalyses the reaction a D-alpha-amino acid + A + H2O = a 2-oxocarboxylate + AH2 + NH4(+). Its pathway is amino-acid degradation; D-alanine degradation; NH(3) and pyruvate from D-alanine: step 1/1. In terms of biological role, oxidative deamination of D-amino acids. The chain is D-amino acid dehydrogenase from Salmonella arizonae (strain ATCC BAA-731 / CDC346-86 / RSK2980).